The sequence spans 137 residues: MNAEAKPGDWLGKVRWDANGLVPVIAQDAATNDVLMFAWMNRDALAKTIELKRAVYYSRSRQRLWFKGEESGHVQHVHEVRLDCDEDVVLLKVEQVEGIACHTGRRSCFFQKFEGTVDDGEWVAVDPVLKDPEHIYK.

Aspartate 83 contacts Mg(2+). Zn(2+) is bound at residue cysteine 84. Positions 85 and 87 each coordinate Mg(2+). Residues cysteine 101 and cysteine 108 each contribute to the Zn(2+) site.

This sequence belongs to the PRA-CH family. In terms of assembly, homodimer. The cofactor is Mg(2+). Requires Zn(2+) as cofactor.

The protein resides in the cytoplasm. The catalysed reaction is 1-(5-phospho-beta-D-ribosyl)-5'-AMP + H2O = 1-(5-phospho-beta-D-ribosyl)-5-[(5-phospho-beta-D-ribosylamino)methylideneamino]imidazole-4-carboxamide. Its pathway is amino-acid biosynthesis; L-histidine biosynthesis; L-histidine from 5-phospho-alpha-D-ribose 1-diphosphate: step 3/9. In terms of biological role, catalyzes the hydrolysis of the adenine ring of phosphoribosyl-AMP. This Burkholderia mallei (strain ATCC 23344) protein is Phosphoribosyl-AMP cyclohydrolase.